The primary structure comprises 465 residues: Uronate isomerase (465 aa).

This sequence belongs to the metallo-dependent hydrolases superfamily. Uronate isomerase family.

It catalyses the reaction D-glucuronate = D-fructuronate. The enzyme catalyses aldehydo-D-galacturonate = keto-D-tagaturonate. Its pathway is carbohydrate metabolism; pentose and glucuronate interconversion. The protein is Uronate isomerase of Streptococcus equi subsp. zooepidemicus (strain MGCS10565).